We begin with the raw amino-acid sequence, 264 residues long: Protein ADMETOS (264 aa).

Paternally imprinted expression in the endosperm.

Functionally, product of a dosage-sensitive gene that contributes to the maintenance of paternally and maternally imprinted gene expression in the endosperm in order to balance parental contributions. Underlies postzygotic reproductive isolation by promoting triploid seed arrest in a genetic dosage-dependent manner, thus being a component of postzygotic interploidy hybridization barriers. The chain is Protein ADMETOS from Arabidopsis thaliana (Mouse-ear cress).